We begin with the raw amino-acid sequence, 223 residues long: MNIAKLIDHTILKANTTKEDVMKVIEEAKEYKFASVCINPTWVKLAADELAGHDVDVCTVIGFPLGASTTETKAFETKDAIAKGATEVDMVINVGALKDGDNELVEKDIYEVVQAAKGKALVKVIIETCLLTDEEKVRACELSVKAGADFVKTSTGFSTGGATAEDIALMRKTVGPNVGVKASGGVRTREDADKMVAAGASRVGASASVAIVLNDAKGATDNY.

The active-site Proton donor/acceptor is the Asp-89. The active-site Schiff-base intermediate with acetaldehyde is the Lys-152. Lys-181 (proton donor/acceptor) is an active-site residue.

It belongs to the DeoC/FbaB aldolase family. DeoC type 1 subfamily.

Its subcellular location is the cytoplasm. The enzyme catalyses 2-deoxy-D-ribose 5-phosphate = D-glyceraldehyde 3-phosphate + acetaldehyde. The protein operates within carbohydrate degradation; 2-deoxy-D-ribose 1-phosphate degradation; D-glyceraldehyde 3-phosphate and acetaldehyde from 2-deoxy-alpha-D-ribose 1-phosphate: step 2/2. In terms of biological role, catalyzes a reversible aldol reaction between acetaldehyde and D-glyceraldehyde 3-phosphate to generate 2-deoxy-D-ribose 5-phosphate. The chain is Deoxyribose-phosphate aldolase from Bacillus cereus (strain G9842).